The primary structure comprises 204 residues: ATP-dependent Clp protease proteolytic subunit (204 aa).

Residue serine 101 is the Nucleophile of the active site. Histidine 126 is a catalytic residue.

Belongs to the peptidase S14 family. As to quaternary structure, fourteen ClpP subunits assemble into 2 heptameric rings which stack back to back to give a disk-like structure with a central cavity, resembling the structure of eukaryotic proteasomes.

It is found in the cytoplasm. It catalyses the reaction Hydrolysis of proteins to small peptides in the presence of ATP and magnesium. alpha-casein is the usual test substrate. In the absence of ATP, only oligopeptides shorter than five residues are hydrolyzed (such as succinyl-Leu-Tyr-|-NHMec, and Leu-Tyr-Leu-|-Tyr-Trp, in which cleavage of the -Tyr-|-Leu- and -Tyr-|-Trp bonds also occurs).. Its function is as follows. Cleaves peptides in various proteins in a process that requires ATP hydrolysis. Has a chymotrypsin-like activity. Plays a major role in the degradation of misfolded proteins. In Deinococcus radiodurans (strain ATCC 13939 / DSM 20539 / JCM 16871 / CCUG 27074 / LMG 4051 / NBRC 15346 / NCIMB 9279 / VKM B-1422 / R1), this protein is ATP-dependent Clp protease proteolytic subunit.